Here is a 456-residue protein sequence, read N- to C-terminus: Cysteine--tRNA ligase (456 aa).

Cys29 is a binding site for Zn(2+). The short motif at 31 to 41 (VTVYDYCHVGH) is the 'HIGH' region element. Zn(2+) is bound by residues Cys210, His235, and Glu239. Positions 267–271 (KMSKS) match the 'KMSKS' region motif. Lys270 is a binding site for ATP.

Belongs to the class-I aminoacyl-tRNA synthetase family. As to quaternary structure, monomer. It depends on Zn(2+) as a cofactor.

The protein resides in the cytoplasm. It carries out the reaction tRNA(Cys) + L-cysteine + ATP = L-cysteinyl-tRNA(Cys) + AMP + diphosphate. The chain is Cysteine--tRNA ligase from Hydrogenovibrio crunogenus (strain DSM 25203 / XCL-2) (Thiomicrospira crunogena).